The chain runs to 316 residues: ATP synthase gamma chain (316 aa).

The protein belongs to the ATPase gamma chain family. In terms of assembly, F-type ATPases have 2 components, CF(1) - the catalytic core - and CF(0) - the membrane proton channel. CF(1) has five subunits: alpha(3), beta(3), gamma(1), delta(1), epsilon(1). CF(0) has three main subunits: a, b and c.

It localises to the cellular thylakoid membrane. Functionally, produces ATP from ADP in the presence of a proton gradient across the membrane. The gamma chain is believed to be important in regulating ATPase activity and the flow of protons through the CF(0) complex. The chain is ATP synthase gamma chain from Prochlorococcus marinus (strain MIT 9211).